The chain runs to 462 residues: Malonyl-coenzyme:anthocyanin 5-O-glucoside-6'''-O-malonyltransferase (462 aa).

Active-site proton acceptor residues include His-167 and Asp-390.

It belongs to the plant acyltransferase family. Detected in petals and sepals, and at lower levels in bracts and red stems.

It catalyses the reaction pelargonidin 3-O-(6-O-[(E)-caffeoyl]-beta-D-glucoside) 5-O-beta-D-glucoside + malonyl-CoA = 4'''-demalonylsalvianin + CoA. The protein operates within pigment biosynthesis; anthocyanin biosynthesis. With respect to regulation, completely inhibited by 10 mM p-coumaric acid, this inhibition is rapid, reversible and non-competitive. Completely inhibited by 0.1 mM Cu(2+), 0.1 mM Hg(2+) and 10 mM caffeic acid. Partially inhibited by 5 mM N-ethylmaleimide, 1 mM diethylpyrocarbonate and 1 mM acetyl-CoA. Catalyzes the transfer of a malonyl group from malonyl-CoA to the 6'''-hydroxyl group of the 5-glucosyl moiety of anthocyanins. Active towards bisdemalonylsalvianin (pelargonidin 3-O-(6-caffeoyl-beta-D-glucoside) 5-O-beta-D-glucoside) and shisonin, but not towards nodemalonylsalvianin, salvianin, pelargonidin 3,5-diglucoside and delphinidin 3,5-diglucoside. This chain is Malonyl-coenzyme:anthocyanin 5-O-glucoside-6'''-O-malonyltransferase, found in Salvia splendens (Scarlet sage).